The chain runs to 543 residues: Chaperonin GroEL (543 aa).

ATP is bound by residues 29–32 (TLGP), 86–90 (DGTTT), Gly-413, 476–478 (NAA), and Asp-492.

The protein belongs to the chaperonin (HSP60) family. As to quaternary structure, forms a cylinder of 14 subunits composed of two heptameric rings stacked back-to-back. Interacts with the co-chaperonin GroES.

The protein localises to the cytoplasm. It catalyses the reaction ATP + H2O + a folded polypeptide = ADP + phosphate + an unfolded polypeptide.. Its function is as follows. Together with its co-chaperonin GroES, plays an essential role in assisting protein folding. The GroEL-GroES system forms a nano-cage that allows encapsulation of the non-native substrate proteins and provides a physical environment optimized to promote and accelerate protein folding. This chain is Chaperonin GroEL, found in Streptococcus pyogenes serotype M3 (strain SSI-1).